Consider the following 178-residue polypeptide: ATP synthase subunit delta (178 aa).

The protein belongs to the ATPase delta chain family. F-type ATPases have 2 components, F(1) - the catalytic core - and F(0) - the membrane proton channel. F(1) has five subunits: alpha(3), beta(3), gamma(1), delta(1), epsilon(1). F(0) has three main subunits: a(1), b(2) and c(10-14). The alpha and beta chains form an alternating ring which encloses part of the gamma chain. F(1) is attached to F(0) by a central stalk formed by the gamma and epsilon chains, while a peripheral stalk is formed by the delta and b chains.

Its subcellular location is the cell membrane. Its function is as follows. F(1)F(0) ATP synthase produces ATP from ADP in the presence of a proton or sodium gradient. F-type ATPases consist of two structural domains, F(1) containing the extramembraneous catalytic core and F(0) containing the membrane proton channel, linked together by a central stalk and a peripheral stalk. During catalysis, ATP synthesis in the catalytic domain of F(1) is coupled via a rotary mechanism of the central stalk subunits to proton translocation. This protein is part of the stalk that links CF(0) to CF(1). It either transmits conformational changes from CF(0) to CF(1) or is implicated in proton conduction. The chain is ATP synthase subunit delta from Streptococcus mutans serotype c (strain ATCC 700610 / UA159).